Reading from the N-terminus, the 631-residue chain is Transmembrane and coiled-coil domain-containing protein 4 (631 aa).

The segment at 1 to 26 (MATWNRPHPRLPVAPEPVAEGESQQP) is disordered. The stretch at 153 to 183 (EEVFLESLKDAKEEESETAEESRKRKEKRRK) forms a coiled coil. 4 helical membrane passes run 187–203 (YLLI…VIGV), 204–220 (TGGL…ATII), 228–248 (LGSV…GAGL), and 343–363 (LSGI…ANVI). The disordered stretch occupies residues 523 to 631 (WSEKGLPLAP…ETQESCAELD (109 aa)). Residues 571–590 (IPSSASQAQVPAGLDQSTED) are compositionally biased toward polar residues.

It belongs to the TMCO4 family.

Its subcellular location is the membrane. This is Transmembrane and coiled-coil domain-containing protein 4 (Tmco4) from Rattus norvegicus (Rat).